Consider the following 187-residue polypeptide: Ribonuclease HII (187 aa).

The RNase H type-2 domain maps to 1–187 (MIILGIDEAG…YKPVQVLLNE (187 aa)). D7, E8, and D99 together coordinate a divalent metal cation.

The protein belongs to the RNase HII family. Mn(2+) is required as a cofactor. Mg(2+) serves as cofactor.

It is found in the cytoplasm. It carries out the reaction Endonucleolytic cleavage to 5'-phosphomonoester.. Endonuclease that specifically degrades the RNA of RNA-DNA hybrids. The protein is Ribonuclease HII of Francisella tularensis subsp. tularensis (strain FSC 198).